We begin with the raw amino-acid sequence, 392 residues long: MNKIIAANQTLTSEAVSEGHPDKIADQISDAILDEMLKVDKNAKVACEVIIAQNLVVIAGEINSPVKKNIDIKEIAKNIIKDIGYTNIDYGLDYKTITVIDAVGNQSRDIINAIEKEGSNTLGAGDQGIIFGYACDDTKNFLPAPYELANSILKKASNLRKSGAIEWLRPDSKSQVTMEYDKNRRPIKIKNIVVSHQHHPNISQKLMRQTIIEEIIKPTIQDKSILDENTTYCINPSGNFVIGGPTGDTGLTGRKIIADSYGGFARHGGGAYSGKDATKVDRSAAYMARYIAKNMVAAGISKEFELQLAYAIGIENPISIQITAGINDPKYASKILNFIVNNFDLTPNGIIEKLKLKQPIYLKTCTYGHFGKNEFEWEKLDFVKKIQTVLKK.

Residue H20 participates in ATP binding. D22 is a binding site for Mg(2+). E48 provides a ligand contact to K(+). The L-methionine site is built by E61 and Q106. Residues 106–116 (QSRDIINAIEK) are flexible loop. ATP contacts are provided by residues 171–173 (DSK), D248, 254–255 (RK), A271, and K275. D248 is a binding site for L-methionine. K279 lines the L-methionine pocket.

This sequence belongs to the AdoMet synthase family. Homotetramer; dimer of dimers. Mg(2+) is required as a cofactor. The cofactor is K(+).

It is found in the cytoplasm. It catalyses the reaction L-methionine + ATP + H2O = S-adenosyl-L-methionine + phosphate + diphosphate. The protein operates within amino-acid biosynthesis; S-adenosyl-L-methionine biosynthesis; S-adenosyl-L-methionine from L-methionine: step 1/1. Its function is as follows. Catalyzes the formation of S-adenosylmethionine (AdoMet) from methionine and ATP. The overall synthetic reaction is composed of two sequential steps, AdoMet formation and the subsequent tripolyphosphate hydrolysis which occurs prior to release of AdoMet from the enzyme. The protein is S-adenosylmethionine synthase of Borreliella afzelii (strain PKo) (Borrelia afzelii).